A 100-amino-acid polypeptide reads, in one-letter code: Large ribosomal subunit protein uL23 (100 aa).

Belongs to the universal ribosomal protein uL23 family. Part of the 50S ribosomal subunit. Contacts protein L29, and trigger factor when it is bound to the ribosome.

In terms of biological role, one of the early assembly proteins it binds 23S rRNA. One of the proteins that surrounds the polypeptide exit tunnel on the outside of the ribosome. Forms the main docking site for trigger factor binding to the ribosome. This chain is Large ribosomal subunit protein uL23, found in Novosphingobium aromaticivorans (strain ATCC 700278 / DSM 12444 / CCUG 56034 / CIP 105152 / NBRC 16084 / F199).